Here is a 379-residue protein sequence, read N- to C-terminus: Deoxyguanosinetriphosphate triphosphohydrolase-like protein (379 aa).

In terms of domain architecture, HD spans 69 to 200 (RLTHTIEVAQ…ANLADEIAYS (132 aa)).

It belongs to the dGTPase family. Type 2 subfamily.

The protein is Deoxyguanosinetriphosphate triphosphohydrolase-like protein of Azoarcus sp. (strain BH72).